The chain runs to 553 residues: Expansin-like protein 7 (553 aa).

The signal sequence occupies residues 1-19 (MRLLGSLILTLSLIASAFS). N39 carries N-linked (GlcNAc...) asparagine glycosylation. In terms of domain architecture, Expansin-like EG45 spans 41–139 (SGSCEYGAYN…RKVSCDASGP (99 aa)). 2 disulfides stabilise this stretch: C44–C73 and C76–C134. Residues N276, N325, and N406 are each glycosylated (N-linked (GlcNAc...) asparagine). Disordered stretches follow at residues 421–447 (GGSGASGVATSSHTGVSSSSSTASSTA) and 460–531 (SSSA…DEHH). 2 stretches are compositionally biased toward low complexity: residues 460 to 476 (SSSASSTSVSSTTAGGK) and 484 to 493 (ISTSGITGSG). A compositionally biased stretch (polar residues) spans 497–516 (AASTSKTTSNPTGKTTGMTG). Residues 520–531 (DHSESHSSDEHH) are compositionally biased toward basic and acidic residues.

It belongs to the expansin family. Expansin A subfamily.

It localises to the secreted. In terms of biological role, may serve to lubricate the movement of the cellulose microfibrils during cell growth and wall extension and/or may serve to maintain the fluid state of the slug cell wall. Overexpression shows aberrant stalk formation. The protein is Expansin-like protein 7 (expl7) of Dictyostelium discoideum (Social amoeba).